Here is a 183-residue protein sequence, read N- to C-terminus: Capsid protein (183 aa).

Residues 136 to 183 form a disordered region; that stretch reads NAPILSTLPETTVVRQRGRAPRRRTPSPRRRRSQSPRRRRSQSPASQC. Positions 151-176 are enriched in basic residues; sequence QRGRAPRRRTPSPRRRRSQSPRRRRS. Residues 155–161 form a 1; half-length repeat; the sequence is APRRRTP. Residues 155–177 form a 3 X 8 AA repeats of S-P-R-R-R-[PR]-S-Q region; it reads APRRRTPSPRRRRSQSPRRRRSQ. The Bipartite nuclear localization signal motif lies at 158-175; the sequence is RRTPSPRRRRSQSPRRRR. A phosphoserine; by host mark is found at Ser-162 and Ser-170. Tandem repeats lie at residues 162–169 and 170–177. Positions 177 to 183 are RNA binding; it reads QSPASQC.

Belongs to the orthohepadnavirus core antigen family. As to quaternary structure, homodimerizes, then multimerizes. Interacts with cytosol exposed regions of viral L glycoprotein present in the reticulum-to-Golgi compartment. Interacts with human FLNB. Phosphorylated form interacts with host importin alpha; this interaction depends on the exposure of the NLS, which itself depends upon genome maturation and/or phosphorylation of the capsid protein. Interacts with host NUP153. Phosphorylated by host SRPK1, SRPK2, and maybe protein kinase C or GAPDH. Phosphorylation is critical for pregenomic RNA packaging. Protein kinase C phosphorylation is stimulated by HBx protein and may play a role in transport of the viral genome to the nucleus at the late step during the viral replication cycle.

The protein resides in the virion. It localises to the host cytoplasm. Its function is as follows. Self assembles to form an icosahedral capsid. Most capsids appear to be large particles with an icosahedral symmetry of T=4 and consist of 240 copies of capsid protein, though a fraction forms smaller T=3 particles consisting of 180 capsid proteins. Entering capsids are transported along microtubules to the nucleus. Phosphorylation of the capsid is thought to induce exposure of nuclear localization signal in the C-terminal portion of the capsid protein that allows binding to the nuclear pore complex via the importin (karyopherin-) alpha and beta. Capsids are imported in intact form through the nuclear pore into the nuclear basket, where it probably binds NUP153. Only capsids that contain the mature viral genome can release the viral DNA and capsid protein into the nucleoplasm. Immature capsids get stuck in the basket. Capsids encapsulate the pre-genomic RNA and the P protein. Pre-genomic RNA is reverse-transcribed into DNA while the capsid is still in the cytoplasm. The capsid can then either be directed to the nucleus, providing more genomes for transcription, or bud through the endoplasmic reticulum to provide new virions. The protein is Capsid protein of Homo sapiens (Human).